Consider the following 143-residue polypeptide: Large ribosomal subunit protein uL11 (143 aa).

The protein belongs to the universal ribosomal protein uL11 family. Part of the ribosomal stalk of the 50S ribosomal subunit. Interacts with L10 and the large rRNA to form the base of the stalk. L10 forms an elongated spine to which L12 dimers bind in a sequential fashion forming a multimeric L10(L12)X complex. Post-translationally, one or more lysine residues are methylated.

Functionally, forms part of the ribosomal stalk which helps the ribosome interact with GTP-bound translation factors. The sequence is that of Large ribosomal subunit protein uL11 from Caulobacter sp. (strain K31).